The following is a 396-amino-acid chain: Elongation factor Tu 1 (396 aa).

One can recognise a tr-type G domain in the interval 10 to 206; sequence KPHCNIGTIG…AVDAYIPQPE (197 aa). A G1 region spans residues 19 to 26; that stretch reads GHVDHGKT. 19-26 serves as a coordination point for GTP; it reads GHVDHGKT. Mg(2+) is bound at residue Thr26. The interval 60–64 is G2; sequence GITIS. A G3 region spans residues 81–84; it reads DCPG. Residues 81 to 85 and 136 to 139 contribute to the GTP site; these read DCPGH and NKCD. Residues 136-139 are G4; the sequence is NKCD. The G5 stretch occupies residues 174–176; the sequence is SAL.

The protein belongs to the TRAFAC class translation factor GTPase superfamily. Classic translation factor GTPase family. EF-Tu/EF-1A subfamily. Monomer.

It localises to the cytoplasm. The catalysed reaction is GTP + H2O = GDP + phosphate + H(+). GTP hydrolase that promotes the GTP-dependent binding of aminoacyl-tRNA to the A-site of ribosomes during protein biosynthesis. The sequence is that of Elongation factor Tu 1 from Rhodopseudomonas palustris (strain BisB5).